The chain runs to 63 residues: Large ribosomal subunit protein uL29 (63 aa).

This sequence belongs to the universal ribosomal protein uL29 family.

The protein is Large ribosomal subunit protein uL29 of Pseudomonas aeruginosa (strain UCBPP-PA14).